The chain runs to 126 residues: Fluoride-specific ion channel FluC (126 aa).

Transmembrane regions (helical) follow at residues 3-23, 39-59, 71-91, and 101-121; these read MILA…LTGV, TVNV…AHVW, VGVL…ALLV, and AYVA…LALI. 2 residues coordinate Na(+): glycine 75 and threonine 78.

This sequence belongs to the fluoride channel Fluc/FEX (TC 1.A.43) family.

It is found in the cell inner membrane. It carries out the reaction fluoride(in) = fluoride(out). With respect to regulation, na(+) is not transported, but it plays an essential structural role and its presence is essential for fluoride channel function. Functionally, fluoride-specific ion channel. Important for reducing fluoride concentration in the cell, thus reducing its toxicity. This chain is Fluoride-specific ion channel FluC, found in Rhodospirillum centenum (strain ATCC 51521 / SW).